We begin with the raw amino-acid sequence, 166 residues long: MMASILLTLFRRTKKKYKRHTDDQASNNQVPKTGQEHGRTSCRAPVENMNRLRGECLRMMEVLKEEMWRIYPVLLPQMELLDKECQTPELGQKTQMTYNWTQWLQTLYTMIMEENVPDMDLLQALREGGVITCQEHTMGMYVLYLIQRCCPMLPKLQFLKKLGKLI.

Residues 17 to 42 (YKRHTDDQASNNQVPKTGQEHGRTSC) are disordered.

Its function is as follows. May counteract the cellular interferon antiviral system. This Hendra virus (isolate Horse/Autralia/Hendra/1994) protein is Protein C (P/V/C).